Consider the following 490-residue polypeptide: Glutamyl-tRNA(Gln) amidotransferase subunit A (490 aa).

Catalysis depends on charge relay system residues Lys-81 and Ser-156. The active-site Acyl-ester intermediate is Ser-180.

This sequence belongs to the amidase family. GatA subfamily. As to quaternary structure, heterotrimer of A, B and C subunits.

It carries out the reaction L-glutamyl-tRNA(Gln) + L-glutamine + ATP + H2O = L-glutaminyl-tRNA(Gln) + L-glutamate + ADP + phosphate + H(+). In terms of biological role, allows the formation of correctly charged Gln-tRNA(Gln) through the transamidation of misacylated Glu-tRNA(Gln) in organisms which lack glutaminyl-tRNA synthetase. The reaction takes place in the presence of glutamine and ATP through an activated gamma-phospho-Glu-tRNA(Gln). The polypeptide is Glutamyl-tRNA(Gln) amidotransferase subunit A (Nocardia farcinica (strain IFM 10152)).